The primary structure comprises 688 residues: Lap-Emerin-Man domain protein 2 (688 aa).

Disordered regions lie at residues 62–113 (LQKE…IDKP) and 202–227 (PQLR…HKRP). Residues 82–92 (PKYLYPSSPSK) are compositionally biased toward low complexity. Over residues 212 to 222 (RLQTSATSSPL) the composition is skewed to polar residues. 2 helical membrane passes run 318-338 (YLVH…LALL) and 547-567 (KVFL…INFF). T683 bears the Phosphothreonine mark. Phosphoserine is present on S684.

It is found in the nucleus inner membrane. Its function is as follows. Nucleus inner membrane protein involved in meiosis. Plays a role in regulating nuclear envelope (NE) morphology and nuclear integrity, particularly during spindle pole body (SPB) extrusion or insertion through the NE, and perhaps during karyokinesis. In Schizosaccharomyces pombe (strain 972 / ATCC 24843) (Fission yeast), this protein is Lap-Emerin-Man domain protein 2 (lem2).